Reading from the N-terminus, the 248-residue chain is Protein canopy homolog 4 (248 aa).

Positions 1-21 (MGPVRLGILLFLFLAVHEAWA) are cleaved as a signal peptide. Intrachain disulfides connect cysteine 38–cysteine 196, cysteine 41–cysteine 184, and cysteine 94–cysteine 156. A disordered region spans residues 200–248 (TWTGKEITDGEEKTEGEEEQEEEEEEEEEEGGDKMTKTGSHPKLDREDL). A compositionally biased stretch (acidic residues) spans 213–230 (TEGEEEQEEEEEEEEEEG). Residues 231–248 (GDKMTKTGSHPKLDREDL) are compositionally biased toward basic and acidic residues.

This sequence belongs to the canopy family. Interacts with TLR4.

It is found in the secreted. In terms of biological role, plays a role in the regulation of the cell surface expression of TLR4. The chain is Protein canopy homolog 4 (CNPY4) from Homo sapiens (Human).